A 65-amino-acid chain; its full sequence is Large ribosomal subunit protein bL35 (65 aa).

Residues 23-44 are disordered; it reads KRMKAGKQHILTKKSQKTKRNL.

This sequence belongs to the bacterial ribosomal protein bL35 family.

The polypeptide is Large ribosomal subunit protein bL35 (Lachnoclostridium phytofermentans (strain ATCC 700394 / DSM 18823 / ISDg) (Clostridium phytofermentans)).